A 301-amino-acid chain; its full sequence is Methionyl-tRNA formyltransferase (301 aa).

109–112 is a binding site for (6S)-5,6,7,8-tetrahydrofolate; it reads SLLP.

Belongs to the Fmt family.

The catalysed reaction is L-methionyl-tRNA(fMet) + (6R)-10-formyltetrahydrofolate = N-formyl-L-methionyl-tRNA(fMet) + (6S)-5,6,7,8-tetrahydrofolate + H(+). Functionally, attaches a formyl group to the free amino group of methionyl-tRNA(fMet). The formyl group appears to play a dual role in the initiator identity of N-formylmethionyl-tRNA by promoting its recognition by IF2 and preventing the misappropriation of this tRNA by the elongation apparatus. The sequence is that of Methionyl-tRNA formyltransferase from Jannaschia sp. (strain CCS1).